A 288-amino-acid chain; its full sequence is Diaminopimelate epimerase (288 aa).

Residues Asn14 and Asn67 each contribute to the substrate site. Cys76 serves as the catalytic Proton donor. Residues 77–78, Asn166, Asn199, and 217–218 contribute to the substrate site; these read GN and ER. Cys226 serves as the catalytic Proton acceptor. Residue 227–228 participates in substrate binding; sequence GT.

It belongs to the diaminopimelate epimerase family. As to quaternary structure, homodimer.

It is found in the cytoplasm. The enzyme catalyses (2S,6S)-2,6-diaminopimelate = meso-2,6-diaminopimelate. Its pathway is amino-acid biosynthesis; L-lysine biosynthesis via DAP pathway; DL-2,6-diaminopimelate from LL-2,6-diaminopimelate: step 1/1. Functionally, catalyzes the stereoinversion of LL-2,6-diaminopimelate (L,L-DAP) to meso-diaminopimelate (meso-DAP), a precursor of L-lysine and an essential component of the bacterial peptidoglycan. This chain is Diaminopimelate epimerase, found in Bacillus cereus (strain ATCC 14579 / DSM 31 / CCUG 7414 / JCM 2152 / NBRC 15305 / NCIMB 9373 / NCTC 2599 / NRRL B-3711).